We begin with the raw amino-acid sequence, 557 residues long: Potassium-transporting ATPase potassium-binding subunit (557 aa).

The next 12 membrane-spanning stretches (helical) occupy residues 5–25 (GFLLIATFLLVLMVLARPLGS), 63–83 (LCAILGLNMLGLAVLFFMLLG), 132–152 (GLTVQNFLSAASGIAVIFALI), 170–190 (LLRITLWVLVPVALLIALFFI), 253–273 (FVQMLAIFLIPTALCFAFGEV), 283–303 (LLWAMSVIFVICVGVVMWAEV), 329–349 (VLVSSLFAVVTTAASCGAVIA), 356–376 (ALGGMVPMWLMQIGEVVFGGV), 379–399 (GLYGMMLFVLLAVFIAGLMIG), 416–436 (LTALAILVTPTLVLMGAALAM), 484–504 (LLAFCMFVGRFGVIIPVMAIA), and 526–546 (LFVGLLIGTVLLVGALTFIPA).

It belongs to the KdpA family. The system is composed of three essential subunits: KdpA, KdpB and KdpC.

It localises to the cell inner membrane. In terms of biological role, part of the high-affinity ATP-driven potassium transport (or Kdp) system, which catalyzes the hydrolysis of ATP coupled with the electrogenic transport of potassium into the cytoplasm. This subunit binds the periplasmic potassium ions and delivers the ions to the membrane domain of KdpB through an intramembrane tunnel. The polypeptide is Potassium-transporting ATPase potassium-binding subunit (Escherichia coli (strain K12 / MC4100 / BW2952)).